The primary structure comprises 341 residues: Methionine import ATP-binding protein MetN (341 aa).

Residues I2 to V241 form the ABC transporter domain. G38–S45 serves as a coordination point for ATP.

Belongs to the ABC transporter superfamily. Methionine importer (TC 3.A.1.24) family. As to quaternary structure, the complex is composed of two ATP-binding proteins (MetN), two transmembrane proteins (MetI) and a solute-binding protein (MetQ).

It is found in the cell membrane. The catalysed reaction is L-methionine(out) + ATP + H2O = L-methionine(in) + ADP + phosphate + H(+). It catalyses the reaction D-methionine(out) + ATP + H2O = D-methionine(in) + ADP + phosphate + H(+). In terms of biological role, part of the ABC transporter complex MetNIQ involved in methionine import. Responsible for energy coupling to the transport system. The polypeptide is Methionine import ATP-binding protein MetN (Staphylococcus saprophyticus subsp. saprophyticus (strain ATCC 15305 / DSM 20229 / NCIMB 8711 / NCTC 7292 / S-41)).